A 255-amino-acid polypeptide reads, in one-letter code: Membrane protein insertase YidC 2 (255 aa).

The first 20 residues, 1–20 (MKKKLGLLAMVVALMAITAG), serve as a signal peptide directing secretion. A lipid anchor (N-palmitoyl cysteine) is attached at Cys21. Cys21 carries S-diacylglycerol cysteine lipidation. The next 5 membrane-spanning stretches (helical) occupy residues 59-79 (YGLA…PLMI), 129-149 (LAGC…YHAI), 160-180 (FLWF…VAAI), 202-222 (MMLW…PAAL), and 223-243 (SLYW…IKGP).

The protein belongs to the OXA1/ALB3/YidC family. Type 2 subfamily.

It is found in the cell membrane. Its function is as follows. Required for the insertion and/or proper folding and/or complex formation of integral membrane proteins into the membrane. Involved in integration of membrane proteins that insert both dependently and independently of the Sec translocase complex, as well as at least some lipoproteins. The protein is Membrane protein insertase YidC 2 of Bacillus anthracis.